Reading from the N-terminus, the 355-residue chain is MATIKQNIPHAHTRILGIGAYRPSEIVTNDDVCQWIESSDEWIVKRTGIHTRHRAPEDVSVLDMAEHAAREALENSGLTGEQLSTIIVSTVSFPYLTPSLAANLADRLGATPAAAYDISAACAGYCYGVAQADSLVRSGDSTNVLVIGVEKLSDVIDNHERSISFLLGDGAGAVVIGPSEVPGIGPSVWGSDGSKWDAIRMTHPLTDIRTVERGGQRTFAKDLVDPETGEMDPDATLWPTLRQDGQTVFRWASWEGARVAQEALDAAGLAPEDLAAFVPHQANMRIIDQMAKVLKLPESVIIARDIAEAGNTSAASIPLATHRLLAEHPELSGKPSLQIGFGAGLVYGAQVVLLP.

Catalysis depends on residues C122 and H280. Positions 281–285 (QANMR) are ACP-binding. N311 is an active-site residue.

It belongs to the thiolase-like superfamily. FabH family. As to quaternary structure, homodimer.

The protein localises to the cytoplasm. The enzyme catalyses malonyl-[ACP] + acetyl-CoA + H(+) = 3-oxobutanoyl-[ACP] + CO2 + CoA. It functions in the pathway lipid metabolism; fatty acid biosynthesis. Its function is as follows. Catalyzes the condensation reaction of fatty acid synthesis by the addition to an acyl acceptor of two carbons from malonyl-ACP. Catalyzes the first condensation reaction which initiates fatty acid synthesis and may therefore play a role in governing the total rate of fatty acid production. Possesses both acetoacetyl-ACP synthase and acetyl transacylase activities. Its substrate specificity determines the biosynthesis of branched-chain and/or straight-chain of fatty acids. In Kocuria rhizophila (strain ATCC 9341 / DSM 348 / NBRC 103217 / DC2201), this protein is Beta-ketoacyl-[acyl-carrier-protein] synthase III.